Here is a 79-residue protein sequence, read N- to C-terminus: MGGFTSIWHWVIVLLVIVLLFGAKKIPELAKGLGSGIKNFKKAVKDDEEEAKNEPKTLDAQVAQTKVHETSEIKSKQES.

A helical transmembrane segment spans residues 1–21 (MGGFTSIWHWVIVLLVIVLLF). The tract at residues 48–79 (EEEAKNEPKTLDAQVAQTKVHETSEIKSKQES) is disordered. Over residues 66–79 (KVHETSEIKSKQES) the composition is skewed to basic and acidic residues.

The protein belongs to the TatA/E family. As to quaternary structure, the Tat system comprises two distinct complexes: a TatABC complex, containing multiple copies of TatA, TatB and TatC subunits, and a separate TatA complex, containing only TatA subunits. Substrates initially bind to the TatABC complex, which probably triggers association of the separate TatA complex to form the active translocon.

Its subcellular location is the cell inner membrane. Functionally, part of the twin-arginine translocation (Tat) system that transports large folded proteins containing a characteristic twin-arginine motif in their signal peptide across membranes. TatA could form the protein-conducting channel of the Tat system. The sequence is that of Sec-independent protein translocase protein TatA from Helicobacter pylori (strain Shi470).